We begin with the raw amino-acid sequence, 466 residues long: NADH-quinone oxidoreductase subunit N (466 aa).

14 helical membrane passes run 9–29 (LIPL…GAIV), 33–53 (CGTV…MLAP), 68–88 (PFTR…LLLA), 100–120 (EEYP…ASAA), 122–142 (FLTL…LVAY), 157–177 (LLMG…LYGA), 190–210 (SAAG…GLAF), 232–252 (VVAF…LLIL), 263–283 (APLW…ALLQ), 289–309 (MLAY…LSGG), 314–334 (AAAF…GALA), 359–379 (GVVL…VGFV), 394–416 (APLA…RVVV), and 438–458 (LSLG…GPLF).

This sequence belongs to the complex I subunit 2 family. In terms of assembly, NDH-1 is composed of 14 different subunits. Subunits NuoA, H, J, K, L, M, N constitute the membrane sector of the complex.

It is found in the cell inner membrane. It catalyses the reaction a quinone + NADH + 5 H(+)(in) = a quinol + NAD(+) + 4 H(+)(out). Functionally, NDH-1 shuttles electrons from NADH, via FMN and iron-sulfur (Fe-S) centers, to quinones in the respiratory chain. The immediate electron acceptor for the enzyme in this species is believed to be ubiquinone. Couples the redox reaction to proton translocation (for every two electrons transferred, four hydrogen ions are translocated across the cytoplasmic membrane), and thus conserves the redox energy in a proton gradient. This Geobacter metallireducens (strain ATCC 53774 / DSM 7210 / GS-15) protein is NADH-quinone oxidoreductase subunit N.